A 445-amino-acid chain; its full sequence is KICSTOR subunit 2 (445 aa).

The protein belongs to the KICS2 family. As to quaternary structure, part of the KICSTOR complex composed of KPTN, ITFG2, KICS2 and SZT2. SZT2 probably serves as a link between the other three proteins in the KICSTOR complex and may mediate the direct interaction with the GATOR complex via GATOR1. The KICSTOR complex interacts directly with the GATOR1 complex and most probably indirectly with the GATOR2 complex in an amino acid-independent manner.

It is found in the lysosome membrane. Functionally, as part of the KICSTOR complex functions in the amino acid-sensing branch of the TORC1 signaling pathway. Recruits, in an amino acid-independent manner, the GATOR1 complex to the lysosomal membranes and allows its interaction with GATOR2 and the RAG GTPases. Functions upstream of the RAG GTPases and is required to negatively regulate mTORC1 signaling in absence of amino acids. In absence of the KICSTOR complex mTORC1 is constitutively localized to the lysosome and activated. The KICSTOR complex is also probably involved in the regulation of mTORC1 by glucose. In Homo sapiens (Human), this protein is KICSTOR subunit 2.